The chain runs to 386 residues: Methylthioribose-1-phosphate isomerase (386 aa).

Aspartate 258 acts as the Proton donor in catalysis.

This sequence belongs to the eIF-2B alpha/beta/delta subunits family. MtnA subfamily.

Its subcellular location is the cytoplasm. The protein resides in the nucleus. It catalyses the reaction 5-(methylsulfanyl)-alpha-D-ribose 1-phosphate = 5-(methylsulfanyl)-D-ribulose 1-phosphate. Its pathway is amino-acid biosynthesis; L-methionine biosynthesis via salvage pathway; L-methionine from S-methyl-5-thio-alpha-D-ribose 1-phosphate: step 1/6. Catalyzes the interconversion of methylthioribose-1-phosphate (MTR-1-P) into methylthioribulose-1-phosphate (MTRu-1-P). The chain is Methylthioribose-1-phosphate isomerase from Uncinocarpus reesii (strain UAMH 1704).